A 106-amino-acid chain; its full sequence is UPF0145 protein FTL_1249 (106 aa).

The protein belongs to the UPF0145 family.

This chain is UPF0145 protein FTL_1249, found in Francisella tularensis subsp. holarctica (strain LVS).